The primary structure comprises 280 residues: Shikimate dehydrogenase (NADP(+)) (280 aa).

Shikimate-binding positions include 20–22 and Thr67; that span reads SLS. The Proton acceptor role is filled by Lys71. Glu83 lines the NADP(+) pocket. Shikimate is bound by residues Asn92 and Asp107. Residues 131–135, 155–160, and Leu224 each bind NADP(+); these read GAGGA and NRTLNK. A shikimate-binding site is contributed by Tyr226. NADP(+) is bound at residue Gly247.

This sequence belongs to the shikimate dehydrogenase family. Homodimer.

It catalyses the reaction shikimate + NADP(+) = 3-dehydroshikimate + NADPH + H(+). Its pathway is metabolic intermediate biosynthesis; chorismate biosynthesis; chorismate from D-erythrose 4-phosphate and phosphoenolpyruvate: step 4/7. Involved in the biosynthesis of the chorismate, which leads to the biosynthesis of aromatic amino acids. Catalyzes the reversible NADPH linked reduction of 3-dehydroshikimate (DHSA) to yield shikimate (SA). The polypeptide is Shikimate dehydrogenase (NADP(+)) (Caldanaerobacter subterraneus subsp. tengcongensis (strain DSM 15242 / JCM 11007 / NBRC 100824 / MB4) (Thermoanaerobacter tengcongensis)).